The sequence spans 598 residues: Kinetochore-associated protein KNL-2 homolog (598 aa).

The SANTA domain maps to 19–111; it reads VVLRDWWLIK…IFGFPPCWER (93 aa). Composition is skewed to basic and acidic residues over residues 335–344 and 371–381; these read AKSSKPEKKG and KSAENKRKIDA. Disordered regions lie at residues 335 to 403, 445 to 500, 520 to 542, and 572 to 598; these read AKSS…NNAK, KESL…EEAE, PEKKVKQQKTNAASTDSLGQKRS, and KDGSETNSAPSKGKGSDSRKRRNLKIK. Residues 383–392 are compositionally biased toward polar residues; the sequence is KLQSPTSNVA. Residues 527 to 539 show a composition bias toward polar residues; sequence QKTNAASTDSLGQ. The required for localization at centromeres stretch occupies residues 538 to 572; it reads GQKRSRSGRVLVSSLEFWRNQIPVYDMDRNLIQVK.

The protein belongs to the KNL2 family. As to expression, expressed in shoot apical meristem, leaf primordia, basal parts of emerging leaves, inflorescence meristems, young inflorescences, developing flower buds, developing sepals and pistils, styles and young siliques.

The protein localises to the nucleus. Its subcellular location is the nucleoplasm. It is found in the nuclear body. It localises to the nucleolus. The protein resides in the chromosome. The protein localises to the centromere. Functionally, involved in recognition of centromeres and centromeric localization of the centromere-specific histone CENH3. Required for normal progression of mitosis and meiosis. May play a role in the determination of the epigenetic status of centromeres. Binds DNA and RNA in vitro. In Arabidopsis thaliana (Mouse-ear cress), this protein is Kinetochore-associated protein KNL-2 homolog.